The chain runs to 100 residues: Urease subunit gamma (100 aa).

The protein belongs to the urease gamma subunit family. In terms of assembly, heterotrimer of UreA (gamma), UreB (beta) and UreC (alpha) subunits. Three heterotrimers associate to form the active enzyme.

Its subcellular location is the cytoplasm. The enzyme catalyses urea + 2 H2O + H(+) = hydrogencarbonate + 2 NH4(+). It participates in nitrogen metabolism; urea degradation; CO(2) and NH(3) from urea (urease route): step 1/1. This chain is Urease subunit gamma, found in Shewanella halifaxensis (strain HAW-EB4).